Here is a 480-residue protein sequence, read N- to C-terminus: Gasdermin-C2 (480 aa).

The triggers pyroptosis stretch occupies residues 1 to 226 (MGYSFDRASK…TCVILPSATK (226 aa)).

It belongs to the gasdermin family. In terms of assembly, homooligomer; homooligomeric ring-shaped pore complex containing 27-28 subunits when inserted in the membrane. In terms of processing, cleavage by CASP8 relieves autoinhibition by releasing the N-terminal moiety (Gasdermin-C2, N-terminal) that initiates pyroptosis. Palmitoylated.

The protein resides in the cytoplasm. The protein localises to the cytosol. It is found in the cell membrane. Its activity is regulated as follows. The full-length protein before cleavage is inactive: intramolecular interactions between N- and C-terminal domains mediate autoinhibition in the absence of activation signal. The intrinsic pyroptosis-inducing activity is carried by the released N-terminal moiety (Gasdermin-C2, N-terminal) following cleavage by caspase CASP8 in response to type-2 immunity following worm infection. This form constitutes the precursor of the pore-forming protein: upon cleavage, the released N-terminal moiety (Gasdermin-C2, N-terminal) binds to membranes and forms pores, triggering pyroptosis. In terms of biological role, pore-forming protein that causes membrane permeabilization and pyroptosis in response to type-2 immunity. Produced by the cleavage of gasdermin-C2 in response to type-2 immunity following worm infection. After cleavage, moves to the plasma membrane where it strongly binds to membrane inner leaflet lipids. Homooligomerizes within the membrane and forms pores of 10-15 nanometers (nm) of inner diameter, triggering pyroptosis and lytic cell death in enterocytes. This Mus musculus (Mouse) protein is Gasdermin-C2.